A 262-amino-acid chain; its full sequence is tRNA pseudouridine synthase A (262 aa).

Aspartate 54 (nucleophile) is an active-site residue. A substrate-binding site is contributed by tyrosine 113.

It belongs to the tRNA pseudouridine synthase TruA family. As to quaternary structure, homodimer.

The enzyme catalyses uridine(38/39/40) in tRNA = pseudouridine(38/39/40) in tRNA. Formation of pseudouridine at positions 38, 39 and 40 in the anticodon stem and loop of transfer RNAs. The polypeptide is tRNA pseudouridine synthase A (Lactobacillus delbrueckii subsp. bulgaricus (strain ATCC BAA-365 / Lb-18)).